The primary structure comprises 149 residues: MADSLTEEQVSEFKEAFSLFDKDGDGQITTKELGTVMRSLGQNPSESELQDMINEVDADNNGTIDFPEFLTMMARKMKDTDSEEEIREAFKVFDRDNNGFISAAELRHVMTSIGEKLTDDEVDEMIREADQDGDGRIDYNEFVQLMMQK.

N-acetylalanine is present on A2. 4 EF-hand domains span residues 8 to 43 (EQVS…LGQN), 44 to 79 (PSES…KMKD), 81 to 116 (DSEE…IGEK), and 117 to 149 (LTDD…MMQK). D21, D23, D25, Q27, E32, D57, D59, N61, T63, E68, D94, D96, N98, E105, D130, D132, D134, R136, and E141 together coordinate Ca(2+).

It belongs to the calmodulin family.

Calmodulin mediates the control of a large number of enzymes, ion channels and other proteins by Ca(2+). Among the enzymes to be stimulated by the calmodulin-Ca(2+) complex are a number of protein kinases and phosphatases. This Colletotrichum gloeosporioides (Anthracnose fungus) protein is Calmodulin.